A 216-amino-acid chain; its full sequence is Ribosomal RNA small subunit methyltransferase G (216 aa).

S-adenosyl-L-methionine-binding positions include Gly83, Met88, 134-135 (VE), and Arg149.

Belongs to the methyltransferase superfamily. RNA methyltransferase RsmG family.

It localises to the cytoplasm. It catalyses the reaction guanosine(527) in 16S rRNA + S-adenosyl-L-methionine = N(7)-methylguanosine(527) in 16S rRNA + S-adenosyl-L-homocysteine. Specifically methylates the N7 position of guanine in position 527 of 16S rRNA. The sequence is that of Ribosomal RNA small subunit methyltransferase G from Pseudomonas putida (strain ATCC 700007 / DSM 6899 / JCM 31910 / BCRC 17059 / LMG 24140 / F1).